Consider the following 289-residue polypeptide: MGNQVKTAALLAALSGLLIAISYWVIGGSSGLIIGIGLAAVTNLFSWYQSDKIALAVYQAQPVSEGEAPGLYRMVQRLSDRANIPMPRVYIVPSQGANAFATGRDPEHAAVAVTEGILNILPDDELEGVIAHELTHIINRDTLTQAVAATVAGAISFLAQMVSYSLWFGGGSRDDNRGANPLGVLLTVMLAPLAATIIQLAISRTREFSADAGSARLTGNPRALARALQRLEALAKQIPLNANPAFEPLLIINSISGQFLGNLFSSHPATEARVAALLKLEQQLPTKAY.

The next 2 helical transmembrane spans lie at 7 to 26 (TAAL…YWVI) and 31 to 48 (GLII…FSWY). Histidine 132 lines the Zn(2+) pocket. Residue glutamate 133 is part of the active site. Histidine 136 is a binding site for Zn(2+). 2 consecutive transmembrane segments (helical) span residues 151–171 (VAGA…FGGG) and 182–202 (LGVL…QLAI). A Zn(2+)-binding site is contributed by glutamate 207.

This sequence belongs to the peptidase M48B family. The cofactor is Zn(2+).

It is found in the cell inner membrane. The protein is Protease HtpX homolog of Nostoc punctiforme (strain ATCC 29133 / PCC 73102).